A 367-amino-acid chain; its full sequence is MSSPPPARSGFYRQEVTKTAWEVRAVYRDLQPVGSGAYGAVCSAVDGRTGAKVAIKKLYRPFQSELFAKRAYRELRLLKHMRHENVIGLLDVFTPDETLDDFTDFYLVMPFMGTDLGKLMKHEKLGEDRIQFLVYQMLKGLRYIHAAGIIHRDLKPGNLAVNEDCELKILDFGLARQADSEMTGYVVTRWYRAPEVILNWMRYTQTVDIWSVGCIMAEMITGKTLFKGSDHLDQLKEIMKVTGTPPAEFVQRLQSDEAKNYMKGLPELEKKDFASILTNASPLAVNLLEKMLVLDAEQRVTAGEALAHPYFESLHDTEDEPQVQKYDDSFDDVDRTLDEWKRVTYKEVLSFKPPRQLGARVSKETPL.

The 285-residue stretch at 27-311 (YRDLQPVGSG…AGEALAHPYF (285 aa)) folds into the Protein kinase domain. ATP-binding positions include 33–41 (VGSGAYGAV) and Lys-56. The active-site Proton acceptor is the Asp-153. Thr-183 bears the Phosphothreonine; by MAP2K3 and MAP2K6 mark. Residues 183–185 (TGY) carry the TXY motif. Residue Tyr-185 is modified to Phosphotyrosine.

It belongs to the protein kinase superfamily. CMGC Ser/Thr protein kinase family. MAP kinase subfamily. Monomer. Interacts with the PDZ domain of the syntrophin SNTA1. Interacts with SH3BP5. Interacts with LIN7C, SCRIB and SYNJ2BP. Interacts with PTPN4; this interaction induces the activation of PTPN4 phosphatase activity. It depends on Mg(2+) as a cofactor. Dually phosphorylated on Thr-183 and Tyr-185 by MAP2K3/MKK3 and MAP2K6/MKK6, which activates the enzyme. Post-translationally, ubiquitinated. Ubiquitination leads to degradation by the proteasome pathway. In terms of tissue distribution, highly expressed in skeletal muscle and heart.

It localises to the cytoplasm. It is found in the nucleus. Its subcellular location is the mitochondrion. The catalysed reaction is L-seryl-[protein] + ATP = O-phospho-L-seryl-[protein] + ADP + H(+). The enzyme catalyses L-threonyl-[protein] + ATP = O-phospho-L-threonyl-[protein] + ADP + H(+). Activated by phosphorylation on threonine and tyrosine. MAP2K3/MKK3 and MAP2K6/MKK6 are both essential for the activation of MAPK12 induced by environmental stress, whereas MAP2K6/MKK6 is the major MAPK12 activator in response to TNF-alpha. Functionally, serine/threonine kinase which acts as an essential component of the MAP kinase signal transduction pathway. MAPK12 is one of the four p38 MAPKs which play an important role in the cascades of cellular responses evoked by extracellular stimuli such as pro-inflammatory cytokines or physical stress leading to direct activation of transcription factors such as ELK1 and ATF2. Accordingly, p38 MAPKs phosphorylate a broad range of proteins and it has been estimated that they may have approximately 200 to 300 substrates each. Some of the targets are downstream kinases such as MAPKAPK2, which are activated through phosphorylation and further phosphorylate additional targets. Plays a role in myoblast differentiation and also in the down-regulation of cyclin D1 in response to hypoxia in adrenal cells suggesting MAPK12 may inhibit cell proliferation while promoting differentiation. Phosphorylates DLG1. Following osmotic shock, MAPK12 in the cell nucleus increases its association with nuclear DLG1, thereby causing dissociation of DLG1-SFPQ complexes. This function is independent of its catalytic activity and could affect mRNA processing and/or gene transcription to aid cell adaptation to osmolarity changes in the environment. Regulates UV-induced checkpoint signaling and repair of UV-induced DNA damage and G2 arrest after gamma-radiation exposure. MAPK12 is involved in the regulation of SLC2A1 expression and basal glucose uptake in L6 myotubes; and negatively regulates SLC2A4 expression and contraction-mediated glucose uptake in adult skeletal muscle. C-Jun (JUN) phosphorylation is stimulated by MAPK14 and inhibited by MAPK12, leading to a distinct AP-1 regulation. MAPK12 is required for the normal kinetochore localization of PLK1, prevents chromosomal instability and supports mitotic cell viability. MAPK12-signaling is also positively regulating the expansion of transient amplifying myogenic precursor cells during muscle growth and regeneration. This Homo sapiens (Human) protein is Mitogen-activated protein kinase 12 (MAPK12).